We begin with the raw amino-acid sequence, 301 residues long: GTPase Era (301 aa).

One can recognise an Era-type G domain in the interval 7–175; sequence YCGFIAIVGR…AAIVRKHLPE (169 aa). The G1 stretch occupies residues 15-22; the sequence is GRPNVGKS. Position 15–22 (15–22) interacts with GTP; that stretch reads GRPNVGKS. The G2 stretch occupies residues 41-45; that stretch reads QTTRH. The tract at residues 62–65 is G3; sequence DTPG. GTP is bound by residues 62 to 66 and 124 to 127; these read DTPGL and NKVD. Residues 124–127 are G4; sequence NKVD. The segment at 154–156 is G5; that stretch reads ISA. Residues 206–283 form the KH type-2 domain; sequence LGAELPYSVT…HLELWVKVKS (78 aa).

This sequence belongs to the TRAFAC class TrmE-Era-EngA-EngB-Septin-like GTPase superfamily. Era GTPase family. In terms of assembly, monomer.

The protein resides in the cytoplasm. It is found in the cell inner membrane. Its function is as follows. An essential GTPase that binds both GDP and GTP, with rapid nucleotide exchange. Plays a role in 16S rRNA processing and 30S ribosomal subunit biogenesis and possibly also in cell cycle regulation and energy metabolism. The polypeptide is GTPase Era (Escherichia coli O1:K1 / APEC).